A 944-amino-acid chain; its full sequence is Translation initiation factor IF-2 (944 aa).

Low complexity predominate over residues 55–81; it reads LTGQAAAPAAAPSSAPRPGARSSAPKP. The interval 55 to 329 is disordered; sequence LTGQAAAPAA…RTKRAEFELR (275 aa). Residues 82 to 92 show a composition bias toward pro residues; that stretch reads GGRPTPGPQPT. A compositionally biased stretch (low complexity) spans 93 to 107; that stretch reads AAPEVEAPEASDVPV. Residues 123–135 are compositionally biased toward basic and acidic residues; sequence ASRKAAAEEKAQA. Composition is skewed to low complexity over residues 136–153 and 211–222; these read EKSA…ETPS and GQRPAAGAAGPR. The span at 223-236 shows a compositional bias: pro residues; that stretch reads PAAPRPGSPRPGAP. A compositionally biased stretch (low complexity) spans 244 to 257; it reads GARPAGFGQRPAGA. A compositionally biased stretch (gly residues) spans 258 to 269; the sequence is GRPGGAPGGAGR. A compositionally biased stretch (low complexity) spans 270–283; the sequence is PGAPAAGGFQRPAG. Over residues 284–310 the composition is skewed to gly residues; sequence GFAGRPGGGGRGRGPGGGTAGAFGRGG. The span at 311-322 shows a compositional bias: basic residues; sequence GKSKSRKSKRTK. The tr-type G domain maps to 437–611; the sequence is IRPPVVTVMG…LTADAGLDLR (175 aa). The segment at 446–453 is G1; sequence GHVDHGKT. 446 to 453 is a GTP binding site; the sequence is GHVDHGKT. Residues 471–475 are G2; that stretch reads GITQH. The tract at residues 496 to 499 is G3; it reads DTPG. GTP is bound by residues 496 to 500 and 550 to 553; these read DTPGH and NKVD. The segment at 550-553 is G4; it reads NKVD. Residues 586-588 are G5; the sequence is SAL.

Belongs to the TRAFAC class translation factor GTPase superfamily. Classic translation factor GTPase family. IF-2 subfamily.

The protein resides in the cytoplasm. One of the essential components for the initiation of protein synthesis. Protects formylmethionyl-tRNA from spontaneous hydrolysis and promotes its binding to the 30S ribosomal subunits. Also involved in the hydrolysis of GTP during the formation of the 70S ribosomal complex. The sequence is that of Translation initiation factor IF-2 from Clavibacter michiganensis subsp. michiganensis (strain NCPPB 382).